We begin with the raw amino-acid sequence, 487 residues long: Glutamyl-tRNA(Gln) amidotransferase subunit A (487 aa).

Residues lysine 79 and serine 158 each act as charge relay system in the active site. Serine 182 serves as the catalytic Acyl-ester intermediate.

This sequence belongs to the amidase family. GatA subfamily. In terms of assembly, heterotrimer of A, B and C subunits.

The enzyme catalyses L-glutamyl-tRNA(Gln) + L-glutamine + ATP + H2O = L-glutaminyl-tRNA(Gln) + L-glutamate + ADP + phosphate + H(+). Functionally, allows the formation of correctly charged Gln-tRNA(Gln) through the transamidation of misacylated Glu-tRNA(Gln) in organisms which lack glutaminyl-tRNA synthetase. The reaction takes place in the presence of glutamine and ATP through an activated gamma-phospho-Glu-tRNA(Gln). The chain is Glutamyl-tRNA(Gln) amidotransferase subunit A from Ehrlichia ruminantium (strain Gardel).